Reading from the N-terminus, the 321-residue chain is L-carnitine dehydrogenase (321 aa).

14–19 (GSGVIG) lines the NAD(+) pocket. The important for catalytic activity stretch occupies residues 317–321 (MTFSE).

It belongs to the 3-hydroxyacyl-CoA dehydrogenase family. L-carnitine dehydrogenase subfamily. As to quaternary structure, homodimer.

It localises to the cytoplasm. It carries out the reaction carnitine + NAD(+) = 3-dehydrocarnitine + NADH + H(+). It participates in amine and polyamine metabolism; carnitine metabolism. Its activity is regulated as follows. The enzyme activity is strongly inhibited by Ag(+), Ni(+), Hg(+), and p-chloromercuribenzoate, and partially inhibited by Li(+), Ca(2+), Mn(2+), Co(2+), Cu(2+), and Zn(2+). Its function is as follows. Catalyzes the NAD(+)-dependent oxidation of L-carnitine to 3-dehydrocarnitine. Is specific for L-carnitine and NAD(+) as substrates since D-carnitine, other carnitine analogs such as choline and betaine, and NADP(+) are not substrates. Despite a high similarity to 3-hydroxyacyl-CoA dehydrogenases, cannot dehydrogenate 3-hydroxybutylate and 3-hydroxybutyl-CoA. Is probably involved in a L-carnitine degradation pathway that allows Pseudomonas sp. strain NBRC 13558 to grow on L-carnitine as the sole source of carbon and nitrogen. This chain is L-carnitine dehydrogenase, found in Pseudomonas sp.